A 28-amino-acid polypeptide reads, in one-letter code: Glutathione S-transferase 5 (28 aa).

Positions 1–28 constitute a GST N-terminal domain; it reads PNYKLTYFNLRGRAEISRYLFAYAGIKY. Tyrosine 7 lines the glutathione pocket.

This sequence belongs to the GST superfamily. Sigma family. In terms of assembly, homodimer.

It is found in the cytoplasm. It carries out the reaction RX + glutathione = an S-substituted glutathione + a halide anion + H(+). In terms of biological role, conjugation of reduced glutathione to a wide number of exogenous and endogenous hydrophobic electrophiles. The polypeptide is Glutathione S-transferase 5 (Gallus gallus (Chicken)).